A 339-amino-acid chain; its full sequence is Ketol-acid reductoisomerase (NADP(+)) (339 aa).

One can recognise a KARI N-terminal Rossmann domain in the interval 1–182 (MRVYYDRDAD…GGGRAGIIET (182 aa)). Residues 24 to 27 (YGSQ), Arg-48, Ser-51, Thr-53, and 83 to 86 (DELQ) each bind NADP(+). Residue His-108 is part of the active site. An NADP(+)-binding site is contributed by Gly-134. One can recognise a KARI C-terminal knotted domain in the interval 183-328 (TFKEECETDL…AKLRGMMPWI (146 aa)). Residues Asp-191, Glu-195, Glu-227, and Glu-231 each coordinate Mg(2+). Ser-252 lines the substrate pocket.

The protein belongs to the ketol-acid reductoisomerase family. Mg(2+) serves as cofactor.

It carries out the reaction (2R)-2,3-dihydroxy-3-methylbutanoate + NADP(+) = (2S)-2-acetolactate + NADPH + H(+). The catalysed reaction is (2R,3R)-2,3-dihydroxy-3-methylpentanoate + NADP(+) = (S)-2-ethyl-2-hydroxy-3-oxobutanoate + NADPH + H(+). The protein operates within amino-acid biosynthesis; L-isoleucine biosynthesis; L-isoleucine from 2-oxobutanoate: step 2/4. It functions in the pathway amino-acid biosynthesis; L-valine biosynthesis; L-valine from pyruvate: step 2/4. Involved in the biosynthesis of branched-chain amino acids (BCAA). Catalyzes an alkyl-migration followed by a ketol-acid reduction of (S)-2-acetolactate (S2AL) to yield (R)-2,3-dihydroxy-isovalerate. In the isomerase reaction, S2AL is rearranged via a Mg-dependent methyl migration to produce 3-hydroxy-3-methyl-2-ketobutyrate (HMKB). In the reductase reaction, this 2-ketoacid undergoes a metal-dependent reduction by NADPH to yield (R)-2,3-dihydroxy-isovalerate. The sequence is that of Ketol-acid reductoisomerase (NADP(+)) from Methylobacterium radiotolerans (strain ATCC 27329 / DSM 1819 / JCM 2831 / NBRC 15690 / NCIMB 10815 / 0-1).